Reading from the N-terminus, the 852-residue chain is Leucine--tRNA ligase (852 aa).

Residues 51–61 (PYPSGDLHMGH) carry the 'HIGH' region motif. The short motif at 615–619 (KMSKS) is the 'KMSKS' region element. Residue Lys618 coordinates ATP.

Belongs to the class-I aminoacyl-tRNA synthetase family.

Its subcellular location is the cytoplasm. The enzyme catalyses tRNA(Leu) + L-leucine + ATP = L-leucyl-tRNA(Leu) + AMP + diphosphate. The polypeptide is Leucine--tRNA ligase (Clavibacter sepedonicus (Clavibacter michiganensis subsp. sepedonicus)).